We begin with the raw amino-acid sequence, 232 residues long: RNA chaperone ProQ (232 aa).

A disordered region spans residues 105–182; it reads EAKARVQAQR…REEQHTPVSD (78 aa). The segment covering 117–136 has biased composition (basic and acidic residues); the sequence is QQAKKREAAAAAGEKEDAPR. The span at 137 to 146 shows a compositional bias: basic residues; sequence RERKPRPTTP. A compositionally biased stretch (basic and acidic residues) spans 147-177; sequence RRKEGAERKPRAQKPVEKAPKTAKAPREEQH.

The protein belongs to the ProQ family.

It localises to the cytoplasm. Functionally, RNA chaperone with significant RNA binding, RNA strand exchange and RNA duplexing activities. May regulate ProP activity through an RNA-based, post-transcriptional mechanism. This Shigella dysenteriae serotype 1 (strain Sd197) protein is RNA chaperone ProQ.